The chain runs to 726 residues: Probable pre-mRNA-splicing factor ATP-dependent RNA helicase DEAH2 (726 aa).

In terms of domain architecture, Helicase ATP-binding spans 71-240 (LKTLNNNQTL…FSGAPLMKVP (170 aa)). Residue 84–91 (GETGSGKT) participates in ATP binding. Residues 187 to 190 (DEAH) carry the DEAH box motif. In terms of domain architecture, Helicase C-terminal spans 265–445 (TVVQIHMCEP…NTVLTLKKLG (181 aa)).

This sequence belongs to the DEAD box helicase family. DEAH subfamily. PRP43 sub-subfamily.

The enzyme catalyses ATP + H2O = ADP + phosphate + H(+). In terms of biological role, may be involved in pre-mRNA splicing. The polypeptide is Probable pre-mRNA-splicing factor ATP-dependent RNA helicase DEAH2 (Arabidopsis thaliana (Mouse-ear cress)).